Reading from the N-terminus, the 604-residue chain is uncharacterized protein (604 aa).

An N-terminal signal peptide occupies residues 1–19; sequence MIVRILLLFIALFTFGVQA.

It to H.influenzae HbpA.

This is an uncharacterized protein from Escherichia coli (strain K12).